We begin with the raw amino-acid sequence, 307 residues long: Nucleotide-binding protein Arth_2083 (307 aa).

G30–S37 lines the ATP pocket. Position 81 to 84 (D81 to S84) interacts with GTP.

This sequence belongs to the RapZ-like family.

Displays ATPase and GTPase activities. This chain is Nucleotide-binding protein Arth_2083, found in Arthrobacter sp. (strain FB24).